Reading from the N-terminus, the 119-residue chain is Promotilin (119 aa).

A signal peptide spans 1 to 25 (MVSRKAVVVLLVVHAAAMLASHTEA). Residues 40–72 (EKERNKGQKKSLSVQQASEELGPLDPSEPTKEE) are disordered.

Belongs to the motilin family.

Its subcellular location is the secreted. In terms of biological role, plays an important role in the regulation of interdigestive gastrointestinal motility and indirectly causes rhythmic contraction of duodenal and colonic smooth muscle. This is Promotilin (MLN) from Sus scrofa (Pig).